Reading from the N-terminus, the 112-residue chain is uncharacterized protein (112 aa).

This is an uncharacterized protein from Gallus gallus (Chicken).